The following is a 3420-amino-acid chain: Adhesin BmaC autotransporter (3420 aa).

An N-terminal signal peptide occupies residues 1–72 (MPNLANQDFT…SLVMAGTAAA (72 aa)). An Autotransporter domain is found at 3138-3420 (GPSGNNGIWA…AGSVGLRVRW (283 aa)).

Its subcellular location is the cell surface. The protein resides in the cell outer membrane. Fibronectin-binding protein, which is involved in adhesion to host cells and in the infective process. Mediates the binding of B.suis to the extracellular matrix and to non-phagocytic cells via cell-associated fibronectin. The sequence is that of Adhesin BmaC autotransporter from Brucella suis biovar 1 (strain 1330).